Here is a 332-residue protein sequence, read N- to C-terminus: Phosphate acyltransferase (332 aa).

This sequence belongs to the PlsX family. Homodimer. Probably interacts with PlsY.

It is found in the cytoplasm. The catalysed reaction is a fatty acyl-[ACP] + phosphate = an acyl phosphate + holo-[ACP]. Its pathway is lipid metabolism; phospholipid metabolism. Its function is as follows. Catalyzes the reversible formation of acyl-phosphate (acyl-PO(4)) from acyl-[acyl-carrier-protein] (acyl-ACP). This enzyme utilizes acyl-ACP as fatty acyl donor, but not acyl-CoA. In Oceanobacillus iheyensis (strain DSM 14371 / CIP 107618 / JCM 11309 / KCTC 3954 / HTE831), this protein is Phosphate acyltransferase.